The following is a 229-amino-acid chain: Growth factor receptor-bound protein 2-A (229 aa).

The 58-residue stretch at 1 to 58 (MEAIAKYDFKATADDELSFKRGDVLKVLNEECDQNWYKAELNGKDGFIPKNYIEMKAH) folds into the SH3 1 domain. The 93-residue stretch at 60–152 (WFFGKIPRAK…NQQIFLRDIE (93 aa)) folds into the SH2 domain. In terms of domain architecture, SH3 2 spans 168–227 (QQPTYVQALFDFDPQEDGELGFRRGDFIQVVDNSDPNWWKGTCLSQTGMFPRNYVTPVNR).

The protein belongs to the GRB2/sem-5/DRK family.

The protein localises to the nucleus. It localises to the cytoplasm. The protein resides in the endosome. Its subcellular location is the golgi apparatus. In terms of biological role, adapter protein that provides a critical link between cell surface growth factor receptors and the Ras signaling pathway. Promotes meiotic reinitiation during oocyte maturation. In Xenopus laevis (African clawed frog), this protein is Growth factor receptor-bound protein 2-A (grb2-a).